Here is a 756-residue protein sequence, read N- to C-terminus: MATTHNLGFPRIGGQRELKFALEDYWGGRQTEQELAITAADLRLRHWQQQAGLDYVPVGDFSLYDQVLDMSVTLGNLPIRAASKEGSELDAYFRAARGRGANDSPCCATAAGEMTKWFDTNYHYIVPELTADTHFELNPERLLTQLSEARKQGLNAKPVIIGPVTYLWLGKTSDASNRLDLLERLLPVYSQLLEALADAGAEWVQLDEPALVTDLDANWRYAFNLAYHQLKANRPKLLLATYFGELRDNLQLACELPVAGLHIDAISAPAEVSRVADWLPSHKVLSLGVVNGRNIWKSDLNSTLGWLEPLNEKLGQRLWLAPSCSLLHAPVDLSREQELDSDIRNWLAFAVQKLDELQILARALNEGRSSVRAELADNQLAIDSRRNSHRVTNPEVRKAVASVTPELGNRHSPYPQRIARQRERLNLPAFPTTTIGSFPQTREIRQARLQFRKGELSEQAYIEQMRAEIVRCVEAQEKLGLDVLVHGEPERNDMVEYFGEQLDGYAFTRFGWVQSYGSRCVKPPILFGDIRRPQAMTVEWIRYAQSLTDKPVKGMLTGPVTILNWSFVRDDQPRKDSCLQLALAIREEVQDLEKAGVNIIQIDEAALREGLPLRQSDWATYLEWAINSFRIAANGVDDSTQIHTHMCYSEFNDIIEAIARMDADVITIETSRSDMELLDAFRSFEYPNDIGPGVYDIHSPNIPDKEHIINLMTLAAERIPAERLWINPDCGLKTRKWEEVTPALETMVAAARELRS.

5-methyltetrahydropteroyltri-L-glutamate is bound by residues 16–19 (RELK) and lysine 116. Residues 435-437 (IGS) and glutamate 488 contribute to the L-homocysteine site. Residues 435–437 (IGS) and glutamate 488 contribute to the L-methionine site. 5-methyltetrahydropteroyltri-L-glutamate is bound by residues 519–520 (RC) and tryptophan 565. Aspartate 603 serves as a coordination point for L-homocysteine. Aspartate 603 is a binding site for L-methionine. Residue glutamate 609 coordinates 5-methyltetrahydropteroyltri-L-glutamate. Residues histidine 645, cysteine 647, and glutamate 669 each contribute to the Zn(2+) site. Residue histidine 698 is the Proton donor of the active site. Residue cysteine 730 coordinates Zn(2+).

This sequence belongs to the vitamin-B12 independent methionine synthase family. Requires Zn(2+) as cofactor.

It carries out the reaction 5-methyltetrahydropteroyltri-L-glutamate + L-homocysteine = tetrahydropteroyltri-L-glutamate + L-methionine. It participates in amino-acid biosynthesis; L-methionine biosynthesis via de novo pathway; L-methionine from L-homocysteine (MetE route): step 1/1. Functionally, catalyzes the transfer of a methyl group from 5-methyltetrahydrofolate to homocysteine resulting in methionine formation. This Marinobacter nauticus (strain ATCC 700491 / DSM 11845 / VT8) (Marinobacter aquaeolei) protein is 5-methyltetrahydropteroyltriglutamate--homocysteine methyltransferase.